The primary structure comprises 345 residues: CCAAT/enhancer-binding protein beta (345 aa).

Positions 1–24 (MQRLVAWDPACLPLPPPPPAFKSM) are required for Lys-174 sumoylation. Position 3 is an asymmetric dimethylarginine; by CARM1 (R3). The interval 24–135 (MEVANFYYEA…YGGKNCKKPA (112 aa)) is required for MYC transcriptional repression. The residue at position 43 (K43) is an N6-acetyllysine; alternate. K43 is subject to N6-methylated lysine; alternate. Disordered regions lie at residues 46–67 (PAAPPAARPGPRPPAGELGSIG) and 79–116 (LEPLGAPQAPAPATATDTFEAAPPAPAPAPASSGQHHD). Residues 47–59 (AAPPAARPGPRPP) are compositionally biased toward pro residues. Residues 84–100 (APQAPAPATATDTFEAA) are compositionally biased toward low complexity. Positions 116 to 124 (DFLSDLFSD) match the 9aaTAD motif. N6-acetyllysine; by KAT2A and KAT2B occurs at positions 129 and 132. K133 is modified (N6-acetyllysine; by KAT2A and KAT2B; alternate). A Glycyl lysine isopeptide (Lys-Gly) (interchain with G-Cter in SUMO2); alternate cross-link involves residue K133. The tract at residues 157–178 (FAPLHPPPPPPPPPAELKAEPG) is disordered. The segment covering 160–171 (LHPPPPPPPPPA) has biased composition (pro residues). K174 participates in a covalent cross-link: Glycyl lysine isopeptide (Lys-Gly) (interchain with G-Cter in SUMO2); alternate. K174 participates in a covalent cross-link: Glycyl lysine isopeptide (Lys-Gly) (interchain with G-Cter in SUMO); alternate. Residues K185 and K187 each participate in a glycyl lysine isopeptide (Lys-Gly) (interchain with G-Cter in SUMO2) cross-link. The segment covering 218–232 (SGSSGSLSTSSSSSP) has biased composition (low complexity). A disordered region spans residues 218–271 (SGSSGSLSTSSSSSPPGTPSPADAKAPPTACYAGAAPAPSQVKSKAKKTVDKHS). Position 226 is a phosphothreonine; by GSK3-beta (T226). S227 and S228 each carry an O-linked (GlcNAc) serine glycan. S231 is subject to Phosphoserine; by GSK3-beta. T235 carries the phosphothreonine; by RPS6KA1, CDK2 and MAPK modification. Glycyl lysine isopeptide (Lys-Gly) (interchain with G-Cter in SUMO2) cross-links involve residues K260 and K262. T266 carries the post-translational modification Phosphothreonine; by RPS6KA1 and PKC/PRKCA. A bZIP domain is found at 271–334 (SDEYKIRRER…STLRNLFKQL (64 aa)). Residues 275 to 295 (KIRRERNNIAVRKSRDKAKMR) form a basic motif region. S288 carries the phosphoserine; by PKC/PRKCA modification. Positions 297–304 (LETQHKVL) are leucine-zipper. Phosphoserine; by CaMK2 is present on S325. Residue K332 forms a Glycyl lysine isopeptide (Lys-Gly) (interchain with G-Cter in SUMO2) linkage.

The protein belongs to the bZIP family. C/EBP subfamily. In terms of assembly, binds DNA as a homodimer and as a heterodimer. Interacts with ATF4. Binds DNA as a heterodimer with ATF4. Interacts with MYB; within the complex, MYB and CEBPB bind to different promoter regions. Can form stable heterodimers with CEBPD. Can form stable heterodimers with CEBPA and CEBPE. Interacts with SIX1. Isoform 2 and isoform 3 also form heterodimers. Interacts with TRIM28 and PTGES2. Interacts with PRDM16. Interacts with CCDC85B. Forms a complex with THOC5. Interacts with ZNF638; this interaction increases transcriptional activation. Interacts with CIDEA and CIDEC; these interactions increase transcriptional activation of a subset of CEBPB downstream target genes. Interacts with DDIT3/CHOP. Interacts with EP300; recruits EP300 to chromatin. Interacts with RORA; the interaction disrupts interaction with EP300. Interacts (not methylated) with MED23, MED26, SMARCA2, SMARCB1 and SMARCC1. Interacts with KAT2A and KAT2B. Interacts with ATF5; EP300 is required for ATF5 and CEBPB interaction and DNA binding. Interacts with NFE2L1; the heterodimer represses expression of DSPP during odontoblast differentiation. Methylated. Methylation at Arg-3 by CARM1 and at Lys-43 by EHMT2 inhibit transactivation activity. Methylation is probably inhibited by phosphorylation at Thr-235. In terms of processing, sumoylated by polymeric chains of SUMO2 or SUMO3. Sumoylation at Lys-174 is required for inhibition of T-cells proliferation. In adipocytes, sumoylation at Lys-174 by PIAS1 leads to ubiquitination and subsequent proteasomal degradation. Desumoylated by SENP2, which abolishes ubiquitination and stabilizes protein levels. Post-translationally, ubiquitinated, leading to proteasomal degradation. Phosphorylated at Thr-235 by MAPK and CDK2, serves to prime phosphorylation at Thr-226 and Ser-231 by GSK3B and acquire DNA-binding as well as transactivation activities, required to induce adipogenesis. MAPK and CDK2 act sequentially to maintain Thr-235 in the primed phosphorylated state during mitotical cloning expansion and thereby progression of terminal differentiation. Phosphorylation at Thr-266 enhances transactivation activity. Phosphorylation at Ser-325 in response to calcium increases transactivation activity. Phosphorylated at Thr-235 by RPS6KA1. In terms of processing, O-glycosylated, glycosylation at Ser-227 and Ser-228 prevents phosphorylation on Thr-235, Ser-231 and Thr-226 and DNA binding activity which delays the adipocyte differentiation program. Post-translationally, acetylated. Acetylation at Lys-43 is an important and dynamic regulatory event that contributes to its ability to transactivate target genes, including those associated with adipogenesis and adipocyte function. Deacetylation by HDAC1 represses its transactivation activity. Acetylated by KAT2A and KAT2B within a cluster of lysine residues between amino acids 129-133, this acetylation is strongly induced by glucocorticoid treatment and enhances transactivation activity. In terms of tissue distribution, expressed at low levels in the lung, kidney and spleen.

The protein localises to the nucleus. The protein resides in the cytoplasm. In terms of biological role, important transcription factor regulating the expression of genes involved in immune and inflammatory responses. Also plays a significant role in adipogenesis, as well as in the gluconeogenic pathway, liver regeneration, and hematopoiesis. The consensus recognition site is 5'-T[TG]NNGNAA[TG]-3'. Its functional capacity is governed by protein interactions and post-translational protein modifications. During early embryogenesis, plays essential and redundant roles with CEBPA. Has a promitotic effect on many cell types such as hepatocytes and adipocytes but has an antiproliferative effect on T-cells by repressing MYC expression, facilitating differentiation along the T-helper 2 lineage. Binds to regulatory regions of several acute-phase and cytokines genes and plays a role in the regulation of acute-phase reaction and inflammation. Also plays a role in intracellular bacteria killing. During adipogenesis, is rapidly expressed and, after activation by phosphorylation, induces CEBPA and PPARG, which turn on the series of adipocyte genes that give rise to the adipocyte phenotype. The delayed transactivation of the CEBPA and PPARG genes by CEBPB appears necessary to allow mitotic clonal expansion and thereby progression of terminal differentiation. Essential for female reproduction because of a critical role in ovarian follicle development. Restricts osteoclastogenesis: together with NFE2L1; represses expression of DSPP during odontoblast differentiation. Essential for gene expression induction in activated macrophages. Plays a major role in immune responses such as CD4(+) T-cell response, granuloma formation and endotoxin shock. Not essential for intracellular bacteria killing. Functionally, acts as a dominant negative through heterodimerization with isoform 2. Promotes osteoblast differentiation and osteoclastogenesis. The sequence is that of CCAAT/enhancer-binding protein beta from Homo sapiens (Human).